The primary structure comprises 311 residues: Ribosomal RNA small subunit methyltransferase H (311 aa).

S-adenosyl-L-methionine-binding positions include 32-34, Asp52, Phe79, Asp100, and Gln107; that span reads AGH. Residues 289–298 are compositionally biased toward basic and acidic residues; sequence SKEELEENNR. The segment at 289–311 is disordered; sequence SKEELEENNRARSAKLRIAEKRK. Residues 300–311 are compositionally biased toward basic residues; the sequence is RSAKLRIAEKRK.

It belongs to the methyltransferase superfamily. RsmH family.

It is found in the cytoplasm. It catalyses the reaction cytidine(1402) in 16S rRNA + S-adenosyl-L-methionine = N(4)-methylcytidine(1402) in 16S rRNA + S-adenosyl-L-homocysteine + H(+). Its function is as follows. Specifically methylates the N4 position of cytidine in position 1402 (C1402) of 16S rRNA. The chain is Ribosomal RNA small subunit methyltransferase H from Bacillus velezensis (strain DSM 23117 / BGSC 10A6 / LMG 26770 / FZB42) (Bacillus amyloliquefaciens subsp. plantarum).